The following is a 448-amino-acid chain: MRVASSLFLPVLLTEVWLVTSFNLSSHSPEASVHLESQDYENQTWEEYTRTDPREEEEEEEEKEEGKDEEYWLRASQQLSNETSSFGFNLLRKISMRHDGNVIFSPFGLSVAMVNLMLGTKGETKVQIENGLNLQALSQAGPLILPALFKKVKETFSSNRDLGLSQGSFAFIHKDFDIKETYFNLSKKYFDIEYVSINFQNSSQARGLINHCIVKETEGKIPKLFDEINPETKLILVDYVLFKGKWLTPFDPSFTEADTFHLDKYRAIKVPMMYREGNFTSTFDKKFRCHILKLPYQGNATMLVVLMEKTGDYLALEDYLTVDLVETWLQNMKTRKMEVFFPKFKLNQRYEMHELLKQMGIRRLFSTSADLSELSAMARNLQVSRVLQQSVLEVDERGTEAVSGTLSEIIAYSMPPAIKVNRPFHFIIYEEMSRMLLFLGRVVNPTVL.

The signal sequence occupies residues 1-21 (MRVASSLFLPVLLTEVWLVTS). The tract at residues 33-70 (VHLESQDYENQTWEEYTRTDPREEEEEEEEKEEGKDEE) is disordered. The segment covering 54 to 63 (REEEEEEEEK) has biased composition (acidic residues). Asn-81 is a glycosylation site (N-linked (GlcNAc...) asparagine). The segment at 140–157 (AGPLILPALFKKVKETFS) is heparin-binding. N-linked (GlcNAc...) asparagine glycans are attached at residues Asn-184, Asn-278, and Asn-299.

This sequence belongs to the serpin family. In terms of processing, phosphorylated by FAM20C in the extracellular medium. As to expression, detectable in liver, but not in heart, brain, spleen, lung, kidney, skeletal muscle or testes.

The protein localises to the secreted. In terms of biological role, inhibits activity of the coagulation protease factor Xa in the presence of PROZ, calcium and phospholipids. Also inhibits factor XIa in the absence of cofactors. This chain is Protein Z-dependent protease inhibitor (Serpina10), found in Mus musculus (Mouse).